The primary structure comprises 430 residues: Adenylosuccinate synthetase (430 aa).

GTP-binding positions include 12-18 (GDEGKGK) and 40-42 (GHT). Residue aspartate 13 is the Proton acceptor of the active site. Mg(2+) contacts are provided by aspartate 13 and glycine 40. Residues 13 to 16 (DEGK), 38 to 41 (NAGH), threonine 128, arginine 142, glutamine 223, threonine 238, and arginine 302 each bind IMP. Residue histidine 41 is the Proton donor of the active site. 298–304 (TTTGRPR) serves as a coordination point for substrate. GTP is bound by residues arginine 304, 330 to 332 (SID), and 412 to 414 (SVG).

It belongs to the adenylosuccinate synthetase family. In terms of assembly, homodimer. Requires Mg(2+) as cofactor.

Its subcellular location is the cytoplasm. The catalysed reaction is IMP + L-aspartate + GTP = N(6)-(1,2-dicarboxyethyl)-AMP + GDP + phosphate + 2 H(+). It functions in the pathway purine metabolism; AMP biosynthesis via de novo pathway; AMP from IMP: step 1/2. Plays an important role in the de novo pathway of purine nucleotide biosynthesis. Catalyzes the first committed step in the biosynthesis of AMP from IMP. The chain is Adenylosuccinate synthetase from Streptococcus equi subsp. equi (strain 4047).